We begin with the raw amino-acid sequence, 310 residues long: ATP phosphoribosyltransferase (310 aa).

This sequence belongs to the ATP phosphoribosyltransferase family.

The protein resides in the cytoplasm. The catalysed reaction is 1-(5-phospho-beta-D-ribosyl)-ATP + diphosphate = 5-phospho-alpha-D-ribose 1-diphosphate + ATP. Its pathway is amino-acid biosynthesis; L-histidine biosynthesis; L-histidine from 5-phospho-alpha-D-ribose 1-diphosphate: step 1/9. Catalyzes the condensation of ATP and 5-phosphoribose 1-diphosphate to form N'-(5'-phosphoribosyl)-ATP (PR-ATP). Has a crucial role in the pathway because the rate of histidine biosynthesis seems to be controlled primarily by regulation of HisG enzymatic activity. This Schizosaccharomyces pombe (strain 972 / ATCC 24843) (Fission yeast) protein is ATP phosphoribosyltransferase (his1).